Here is a 196-residue protein sequence, read N- to C-terminus: Imidazoleglycerol-phosphate dehydratase (196 aa).

This sequence belongs to the imidazoleglycerol-phosphate dehydratase family.

The protein localises to the cytoplasm. The catalysed reaction is D-erythro-1-(imidazol-4-yl)glycerol 3-phosphate = 3-(imidazol-4-yl)-2-oxopropyl phosphate + H2O. The protein operates within amino-acid biosynthesis; L-histidine biosynthesis; L-histidine from 5-phospho-alpha-D-ribose 1-diphosphate: step 6/9. In Granulibacter bethesdensis (strain ATCC BAA-1260 / CGDNIH1), this protein is Imidazoleglycerol-phosphate dehydratase.